Reading from the N-terminus, the 140-residue chain is Large ribosomal subunit protein uL11 (140 aa).

The protein belongs to the universal ribosomal protein uL11 family. As to quaternary structure, part of the ribosomal stalk of the 50S ribosomal subunit. Interacts with L10 and the large rRNA to form the base of the stalk. L10 forms an elongated spine to which L12 dimers bind in a sequential fashion forming a multimeric L10(L12)X complex. Post-translationally, one or more lysine residues are methylated.

In terms of biological role, forms part of the ribosomal stalk which helps the ribosome interact with GTP-bound translation factors. The polypeptide is Large ribosomal subunit protein uL11 (Heliobacterium modesticaldum (strain ATCC 51547 / Ice1)).